Here is an 893-residue protein sequence, read N- to C-terminus: Translation initiation factor IF-2 (893 aa).

Disordered regions lie at residues 51–203 (KEHG…AEAE) and 216–300 (EENE…SMQH). Basic and acidic residues-rich tracts occupy residues 102 to 203 (ALEE…AEAE), 216 to 238 (EENEARWKEEEQKKSAAEKDADY), and 245 to 261 (HAREAEDAADRKEEQQP). Residues 392-561 (GRAPVVTIMG…LLQSEVLELT (170 aa)) form the tr-type G domain. The tract at residues 401–408 (GHVDHGKT) is G1. 401-408 (GHVDHGKT) serves as a coordination point for GTP. Residues 426–430 (GITQH) are G2. The interval 447–450 (DTPG) is G3. GTP is bound by residues 447 to 451 (DTPGH) and 501 to 504 (NKID). A G4 region spans residues 501 to 504 (NKID). Residues 537–539 (SAK) form a G5 region.

Belongs to the TRAFAC class translation factor GTPase superfamily. Classic translation factor GTPase family. IF-2 subfamily.

The protein localises to the cytoplasm. One of the essential components for the initiation of protein synthesis. Protects formylmethionyl-tRNA from spontaneous hydrolysis and promotes its binding to the 30S ribosomal subunits. Also involved in the hydrolysis of GTP during the formation of the 70S ribosomal complex. The sequence is that of Translation initiation factor IF-2 from Aliivibrio fischeri (strain MJ11) (Vibrio fischeri).